The primary structure comprises 225 residues: Endoglucanase (225 aa).

An N-terminal signal peptide occupies residues 1–15; that stretch reads MKVFVVLAAIVAIAN. The active-site Nucleophile is Asp-29. 7 disulfide bridges follow: Cys-30-Cys-152, Cys-31-Cys-66, Cys-35-Cys-103, Cys-50-Cys-74, Cys-104-Cys-219, Cys-106-Cys-209, and Cys-176-Cys-187. N-linked (GlcNAc...) asparagine glycosylation is present at Asn-55. Residue Asp-138 is the Proton donor of the active site.

It belongs to the glycosyl hydrolase 45 (cellulase K) family. Post-translationally, N- and O-glycosylated. Contains hybrid- and complex-type N-glycans.

The protein localises to the secreted. The enzyme catalyses Endohydrolysis of (1-&gt;4)-beta-D-glucosidic linkages in cellulose, lichenin and cereal beta-D-glucans.. Its activity is regulated as follows. Activity is not affected by metal ions except Mn(2+), which reduces the activity by 40-50%. However, no significant change in activity in response to 1 mM EDTA. In terms of biological role, hydrolyzes carboxymethylcellulose (CMC). Also hydrolyzes lichenan and barley beta-1,4-D-glucan. CMC is hydrolyzed majorily to cellobiose (G2), cellotriose (G3) and cellotetraose (G4). Cellohexaose (G6) is hydrolyzed to G4 and G2 with traces of G3. Cellopentaose (G5) is completely hydrolyzed to G2 and G3, and G4 is partially hydrolyzed to G2. Does not hydrolyze G2 or G3. Does not hydrolyze crystalline cellulose, soluble starch, xylan, mannan or laminarin. The protein is Endoglucanase of Cryptopygus antarcticus (Antarctic springtail).